A 161-amino-acid chain; its full sequence is N5-carboxyaminoimidazole ribonucleotide mutase (161 aa).

Positions 9, 12, and 39 each coordinate substrate.

This sequence belongs to the AIR carboxylase family. Class I subfamily.

It carries out the reaction 5-carboxyamino-1-(5-phospho-D-ribosyl)imidazole + H(+) = 5-amino-1-(5-phospho-D-ribosyl)imidazole-4-carboxylate. The protein operates within purine metabolism; IMP biosynthesis via de novo pathway; 5-amino-1-(5-phospho-D-ribosyl)imidazole-4-carboxylate from 5-amino-1-(5-phospho-D-ribosyl)imidazole (N5-CAIR route): step 2/2. Functionally, catalyzes the conversion of N5-carboxyaminoimidazole ribonucleotide (N5-CAIR) to 4-carboxy-5-aminoimidazole ribonucleotide (CAIR). This is N5-carboxyaminoimidazole ribonucleotide mutase from Vibrio parahaemolyticus serotype O3:K6 (strain RIMD 2210633).